Here is a 538-residue protein sequence, read N- to C-terminus: Phosphoenolpyruvate carboxykinase (ATP) (538 aa).

3 residues coordinate substrate: Arg64, Tyr206, and Lys212. Residues Lys212, His231, and 247 to 255 contribute to the ATP site; that span reads GLSGTGKTT. The Mn(2+) site is built by Lys212 and His231. Asp268 contributes to the Mn(2+) binding site. Residues Glu296, Arg332, 448-449, and Thr454 contribute to the ATP site; that span reads RI. Substrate is bound at residue Arg332.

The protein belongs to the phosphoenolpyruvate carboxykinase (ATP) family. In terms of assembly, monomer. It depends on Mn(2+) as a cofactor.

The protein localises to the cytoplasm. The enzyme catalyses oxaloacetate + ATP = phosphoenolpyruvate + ADP + CO2. The protein operates within carbohydrate biosynthesis; gluconeogenesis. Functionally, involved in the gluconeogenesis. Catalyzes the conversion of oxaloacetate (OAA) to phosphoenolpyruvate (PEP) through direct phosphoryl transfer between the nucleoside triphosphate and OAA. The protein is Phosphoenolpyruvate carboxykinase (ATP) of Enterobacter sp. (strain 638).